The sequence spans 212 residues: Thaumatin-like protein 1b (212 aa).

Intrachain disulfides connect cysteine 47-cysteine 57, cysteine 62-cysteine 69, cysteine 117-cysteine 200, cysteine 122-cysteine 183, cysteine 130-cysteine 146, cysteine 150-cysteine 159, and cysteine 160-cysteine 170.

It belongs to the thaumatin family.

It is found in the secreted. This Malus domestica (Apple) protein is Thaumatin-like protein 1b.